Consider the following 271-residue polypeptide: Putative phosphoenolpyruvate synthase regulatory protein (271 aa).

152–159 (GVSRCGKT) contacts ADP.

This sequence belongs to the pyruvate, phosphate/water dikinase regulatory protein family. PSRP subfamily.

The catalysed reaction is [pyruvate, water dikinase] + ADP = [pyruvate, water dikinase]-phosphate + AMP + H(+). The enzyme catalyses [pyruvate, water dikinase]-phosphate + phosphate + H(+) = [pyruvate, water dikinase] + diphosphate. Functionally, bifunctional serine/threonine kinase and phosphorylase involved in the regulation of the phosphoenolpyruvate synthase (PEPS) by catalyzing its phosphorylation/dephosphorylation. The protein is Putative phosphoenolpyruvate synthase regulatory protein of Legionella pneumophila (strain Lens).